The following is a 49-amino-acid chain: Heme exporter protein C (49 aa).

It belongs to the CcmC/CycZ/HelC family.

The protein localises to the cell inner membrane. Functionally, required for the export of heme to the periplasm for the biogenesis of c-type cytochromes. The chain is Heme exporter protein C from Rhizobium leguminosarum bv. viciae.